Reading from the N-terminus, the 396-residue chain is Protein NDRG1-B (396 aa).

A disordered region spans residues 326 to 396; it reads RSRTGSAASS…NTPKSMEVSC (71 aa). A compositionally biased stretch (low complexity) spans 327-340; the sequence is SRTGSAASSSSQDG. Repeat copies occupy residues 340 to 349, 350 to 359, 360 to 369, and 370 to 379. Positions 340-379 are 4 X 10 AA tandem repeats of G-[NS]-R-S-R-[AS]-[HQ]-T-[DGN]-[DET]; sequence GNRSRSHTNEGSRSRSQTGDGNRSRAHTGDGNRSRSHTDT. Over residues 366-377 the composition is skewed to basic and acidic residues; it reads HTGDGNRSRSHT. The segment covering 378 to 390 has biased composition (polar residues); the sequence is DTNNVNSDHNTPK.

This sequence belongs to the NDRG family.

Its function is as follows. May be involved in pronephros development, after specification of the pronephros. This is Protein NDRG1-B (ndrg1-b) from Xenopus laevis (African clawed frog).